The primary structure comprises 283 residues: Pantothenate synthetase (283 aa).

Residue Met31–His38 participates in ATP binding. Catalysis depends on His38, which acts as the Proton donor. Gln62 serves as a coordination point for (R)-pantoate. A beta-alanine-binding site is contributed by Gln62. Gly148–Asp151 contacts ATP. Gln154 is a binding site for (R)-pantoate. ATP is bound by residues Val177 and Lys185–Arg188.

The protein belongs to the pantothenate synthetase family. As to quaternary structure, homodimer.

Its subcellular location is the cytoplasm. It catalyses the reaction (R)-pantoate + beta-alanine + ATP = (R)-pantothenate + AMP + diphosphate + H(+). It functions in the pathway cofactor biosynthesis; (R)-pantothenate biosynthesis; (R)-pantothenate from (R)-pantoate and beta-alanine: step 1/1. Functionally, catalyzes the condensation of pantoate with beta-alanine in an ATP-dependent reaction via a pantoyl-adenylate intermediate. This Staphylococcus aureus (strain bovine RF122 / ET3-1) protein is Pantothenate synthetase.